The following is a 691-amino-acid chain: Elongation factor G (691 aa).

The tr-type G domain maps to 8-282 (NKTRNIGIMA…AVVEFLPAPV (275 aa)). GTP is bound by residues 17 to 24 (AHIDAGKT), 81 to 85 (DTPGH), and 135 to 138 (NKMD).

Belongs to the TRAFAC class translation factor GTPase superfamily. Classic translation factor GTPase family. EF-G/EF-2 subfamily.

Its subcellular location is the cytoplasm. Its function is as follows. Catalyzes the GTP-dependent ribosomal translocation step during translation elongation. During this step, the ribosome changes from the pre-translocational (PRE) to the post-translocational (POST) state as the newly formed A-site-bound peptidyl-tRNA and P-site-bound deacylated tRNA move to the P and E sites, respectively. Catalyzes the coordinated movement of the two tRNA molecules, the mRNA and conformational changes in the ribosome. The chain is Elongation factor G from Heliobacterium modesticaldum (strain ATCC 51547 / Ice1).